The sequence spans 271 residues: GATA transcription factor 19 (271 aa).

The disordered stretch occupies residues 1 to 23 (MAAEPPADGRDPPADDGAAGDGA). The Tify domain occupies 33-68 (LSAASEQLTLVYQGEVYVFDPVPPQKVQAVLLVLGG). The CCT domain maps to 95–137 (RVASLMRFREKRKERCFDKKIRYSVRKEVAQKMKRRKGQFAGR). Residues 166 to 193 (CQNCGISSRLTPAMRRGPAGPRSLCNAC) form a GATA-type zinc finger. A disordered region spans residues 238-271 (NQTTMKTDTEMVPEQEQKADVLPPTKEEDSMATS). Basic and acidic residues predominate over residues 252-271 (QEQKADVLPPTKEEDSMATS).

This sequence belongs to the type IV zinc-finger family. Class C subfamily.

The protein resides in the nucleus. In terms of biological role, transcriptional activator that specifically binds 5'-GATA-3' or 5'-GAT-3' motifs within gene promoters. This Oryza sativa subsp. japonica (Rice) protein is GATA transcription factor 19.